The following is a 332-amino-acid chain: Long form salivary protein D7L2 (332 aa).

The signal sequence occupies residues 1 to 21 (MFPPRKFLLSSFILAALHVTA). 2 disulfide bridges follow: C40–C77 and C73–C133. W61 is a binding site for leukotriene E4. Leukotriene E4 contacts are provided by G157 and K176. Intrachain disulfides connect C184–C219, C200–C331, and C259–C278. The noradrenaline site is built by E185, R203, and H216. 2 residues coordinate noradrenaline: D294 and E297.

It belongs to the PBP/GOBP family. As to quaternary structure, interacts with human CD4. In terms of tissue distribution, saliva (at protein level). Female salivary gland (at protein level). Detected in the head and thorax of the female mosquitoes, where the salivary glands are located.

The protein localises to the secreted. Its function is as follows. Modulates blood feeding of female mosquitoes on vertebrate species by binding and sequestering different mediators involved in the host response, such as biogenic amines and eicosanoids. Binds serotonin, histamine, tryptamine, noradrenaline, leukotriene B4, leukotriene C4, leukotriene D4, leukotriene E4 and U-46619, a stable analog of thromboxane A2. Does not bind adrenaline. Exhibits vasodilating activity. Inhibits agonist-induced platelet aggregation but not blood clotting. (Microbial infection) Probably promotes Plasmodium gallinaceum oocyst development in mosquito midgut. In Aedes aegypti (Yellowfever mosquito), this protein is Long form salivary protein D7L2.